The sequence spans 152 residues: Protein NrdI (152 aa).

It belongs to the NrdI family.

Its function is as follows. Probably involved in ribonucleotide reductase function. The protein is Protein NrdI of Mycobacterium sp. (strain JLS).